A 542-amino-acid polypeptide reads, in one-letter code: MAMAGAPIVVLPQNVKRYVGRDAQRMNILAGRIIAETVRTTLGPKGMDKMLVDELGDIVVTNDGVTILKEMSVEHPAAKMLIEVAKTQEKEVGDGTTTAVVIAGELLRKAEELLDQNIHPSVIINGYEMARNKAVEELKSIAKEVKPEDTEMLKKIAMTSITGKGAEKAREQLAEIVVEAVRAVVDEETGKVDKDLIKVEKKEGAPIEETKLIRGVVIDKERVNPQMPKKVENAKIALLNCPIEVKETETDAEIRITDPAKLMEFIEQEEKMIKDMVEKIAATGANVVFCQKGIDDLAQHYLAKKGILAVRRVKKSDMEKLAKATGARIVTKIDDLTPEDLGEAGLVEERKVAGDAMIFVEQCKHPKAVTILARGSTEHVVEEVARAIDDAIGVVKCALEEGKIVAGGGATEIELAKRLRKFAESVAGREQLAVKAFADALEVIPRTLAENSGLDPIDMLVKLRAAHEKEGGEVYGLDVFEGEVVDMLEKGVVEPLKVKTQAIDSATEASVMLLRIDDVIAAEKVKGDEKGGEGGDMGGDEF.

Belongs to the TCP-1 chaperonin family. Forms an oligomeric complex of eight-membered rings.

Its function is as follows. Molecular chaperone; binds unfolded polypeptides in vitro, and has a weak ATPase activity. The polypeptide is Thermosome subunit (ths) (Methanocaldococcus jannaschii (strain ATCC 43067 / DSM 2661 / JAL-1 / JCM 10045 / NBRC 100440) (Methanococcus jannaschii)).